Reading from the N-terminus, the 565-residue chain is Proline--tRNA ligase (565 aa).

The protein belongs to the class-II aminoacyl-tRNA synthetase family. ProS type 1 subfamily. As to quaternary structure, homodimer.

The protein resides in the cytoplasm. The enzyme catalyses tRNA(Pro) + L-proline + ATP = L-prolyl-tRNA(Pro) + AMP + diphosphate. Its function is as follows. Catalyzes the attachment of proline to tRNA(Pro) in a two-step reaction: proline is first activated by ATP to form Pro-AMP and then transferred to the acceptor end of tRNA(Pro). As ProRS can inadvertently accommodate and process non-cognate amino acids such as alanine and cysteine, to avoid such errors it has two additional distinct editing activities against alanine. One activity is designated as 'pretransfer' editing and involves the tRNA(Pro)-independent hydrolysis of activated Ala-AMP. The other activity is designated 'posttransfer' editing and involves deacylation of mischarged Ala-tRNA(Pro). The misacylated Cys-tRNA(Pro) is not edited by ProRS. This is Proline--tRNA ligase from Bacillus pumilus (strain SAFR-032).